The following is a 233-amino-acid chain: ATP synthase subunit C lysine N-methyltransferase (233 aa).

M1 carries the post-translational modification N-acetylmethionine. A helical membrane pass occupies residues 38–58 (FLLTGLVGGTLVAVYAVATPF). The required for mitochondrial location stretch occupies residues 56 to 90 (TPFVTPALRKVCLPFVPATTKQIENVVKMLRCRRG).

This sequence belongs to the ANT/ATPSC lysine N-methyltransferase family. As to expression, ubiquitously expressed.

The protein resides in the mitochondrion membrane. The catalysed reaction is L-lysyl-[protein] + 3 S-adenosyl-L-methionine = N(6),N(6),N(6)-trimethyl-L-lysyl-[protein] + 3 S-adenosyl-L-homocysteine + 3 H(+). Its function is as follows. Mitochondrial protein-lysine N-methyltransferase that trimethylates ATP synthase subunit C, ATP5MC1 and ATP5MC2. Trimethylation is required for proper incorporation of the C subunit into the ATP synthase complex and mitochondrial respiration. Promotes chronic pain. Involved in persistent inflammatory and neuropathic pain: methyltransferase activity in the mitochondria of sensory neurons promotes chronic pain via a pathway that depends on the production of reactive oxygen species (ROS) and on the engagement of spinal cord microglia. The polypeptide is ATP synthase subunit C lysine N-methyltransferase (Homo sapiens (Human)).